The following is a 318-amino-acid chain: Rhomboid-related protein 4 (318 aa).

The Cytoplasmic segment spans residues 1–21 (MQRRSRGINTGLILLLSQIFH). The helical transmembrane segment at 22 to 42 (VGINNIPPVTLATLALNIWFF) threads the bilayer. The Extracellular segment spans residues 43 to 106 (LNPQKPLYSS…RRLGSRWFAY (64 aa)). Residues 107–127 (VITTFSVLTGVVYLLLQFAVA) traverse the membrane as a helical segment. The Cytoplasmic segment spans residues 128–137 (EFMDEPDFKR). Residues 138–154 (SCAVGFSGVLFALKVLN) traverse the membrane as a helical segment. The Nucleophile role is filled by Ser-144. Topologically, residues 155–179 (NHYCPGGFVNILGFPVPNRFACWVE) are extracellular. A helical transmembrane segment spans residues 180-204 (LVAIHLFSPGTSFAGHQAGILVGLM). The active site involves His-195. Residues 205–318 (YTQGPLKKIM…RQRLHRFDSQ (114 aa)) lie on the Cytoplasmic side of the membrane. The tract at residues 271 to 286 (SEEEQLERALQASLWD) is ubiquitin-binding domain (UBD). The disordered stretch occupies residues 285–318 (WDRGHTRNSPPPYGFHLSPEEEMRRQRLHRFDSQ). Residues 302–318 (SPEEEMRRQRLHRFDSQ) show a composition bias toward basic and acidic residues. The VCP/p97-interacting motif (VIM) stretch occupies residues 303–318 (PEEEMRRQRLHRFDSQ).

It belongs to the peptidase S54 family. In terms of assembly, interacts with BIK and STEAP3. Interacts (via C-terminal domain) with VCP. Interacts with ubiquitin and ubiquitinated proteins.

The protein localises to the endoplasmic reticulum membrane. The protein resides in the mitochondrion membrane. It carries out the reaction Cleaves type-1 transmembrane domains using a catalytic dyad composed of serine and histidine that are contributed by different transmembrane domains.. Its activity is regulated as follows. Inhibited by aprotinin. Intramembrane-cleaving serine protease that cleaves single transmembrane or multi-pass membrane proteins in the hydrophobic plane of the membrane, luminal loops and juxtamembrane regions. Involved in regulated intramembrane proteolysis and the subsequent release of functional polypeptides from their membrane anchors. Functional component of endoplasmic reticulum-associated degradation (ERAD) for misfolded membrane proteins. Required for the degradation process of some specific misfolded endoplasmic reticulum (ER) luminal proteins. Participates in the transfer of misfolded proteins from the ER to the cytosol, where they are destroyed by the proteasome in a ubiquitin-dependent manner. Functions in BIK, MPZ, PKD1, PTCRA, RHO, STEAP3 and TRAC processing. Involved in the regulation of exosomal secretion; inhibits the TSAP6-mediated secretion pathway. Involved in the regulation of apoptosis; modulates BIK-mediated apoptotic activity. Also plays a role in the regulation of spermatogenesis; inhibits apoptotic activity in spermatogonia. The chain is Rhomboid-related protein 4 (RHBDD1) from Pongo abelii (Sumatran orangutan).